The primary structure comprises 484 residues: Probable peptide/nitrate transporter At3g43790 (484 aa).

The next 12 membrane-spanning stretches (helical) occupy residues 39–59, 76–96, 107–127, 129–149, 168–188, 210–230, 278–298, 318–338, 355–375, 381–401, 416–436, and 460–480; these read FIWL…PYIY, FYAG…SIFW, PIIL…GLST, FWLA…LGVI, VVST…GYLA, FLPS…CWWL, MAII…NEIF, VGEV…LVYP, VLLI…GVTL, CASI…FIML, ISMT…GVLF, and VFLV…IPYI.

It belongs to the major facilitator superfamily.

It localises to the membrane. In Arabidopsis thaliana (Mouse-ear cress), this protein is Probable peptide/nitrate transporter At3g43790 (ZIFL2).